Here is an 861-residue protein sequence, read N- to C-terminus: Integrator complex subunit 6-like (861 aa).

In terms of domain architecture, VWFA spans 3–227 (ILLFLIDTSA…QCLESLVQKV (225 aa)). Positions 605 to 626 (PQNKVKRPGEPNSPMSSKRRRS) are disordered. The residue at position 617 (serine 617) is a Phosphoserine.

This is Integrator complex subunit 6-like (INTS6L) from Homo sapiens (Human).